Here is a 368-residue protein sequence, read N- to C-terminus: MLYYFLKYINDIYHFPALRVIDYLTFRASAAAITALLITLLIGPKLIAYLKQRIIEPIKEEAPPEHRKKKQLPTMGGLLIIFAFELSVFLWAKVDSPHVWLVMVAVLWMGAVGFLDDYLKVVKKVKGGLAAHYKLIGQVLLGLLVGLYAWFDPSMAVLRDTTTVPFFKNLTINYGIFYVPVVIFIITAISNAVNLTDGLDGLAAGTSAIAFIGLAGFAYLAGNAVYATYLNIPFIQGGGEVAIVSMALVMACVGFLWFNSNPAEIIMGDTGSLALGSAMAVIALLIKQELLLPLMAGVFVLETFSVSLQVLYFKYTRKRTGEGKRIFLMAPLHHHFQLKGWAEQKIVIRFWIMAILFFLASLMTLKLR.

9 consecutive transmembrane segments (helical) span residues Ala-30–Leu-50, Leu-72–Ala-92, Val-99–Leu-119, Leu-135–Met-155, Leu-170–Ser-190, Gly-201–Ala-221, Gly-238–Phe-258, Ile-265–Ile-286, and Lys-345–Leu-365.

It belongs to the glycosyltransferase 4 family. MraY subfamily. The cofactor is Mg(2+).

The protein localises to the cell inner membrane. The enzyme catalyses UDP-N-acetyl-alpha-D-muramoyl-L-alanyl-gamma-D-glutamyl-meso-2,6-diaminopimeloyl-D-alanyl-D-alanine + di-trans,octa-cis-undecaprenyl phosphate = di-trans,octa-cis-undecaprenyl diphospho-N-acetyl-alpha-D-muramoyl-L-alanyl-D-glutamyl-meso-2,6-diaminopimeloyl-D-alanyl-D-alanine + UMP. It participates in cell wall biogenesis; peptidoglycan biosynthesis. In terms of biological role, catalyzes the initial step of the lipid cycle reactions in the biosynthesis of the cell wall peptidoglycan: transfers peptidoglycan precursor phospho-MurNAc-pentapeptide from UDP-MurNAc-pentapeptide onto the lipid carrier undecaprenyl phosphate, yielding undecaprenyl-pyrophosphoryl-MurNAc-pentapeptide, known as lipid I. The chain is Phospho-N-acetylmuramoyl-pentapeptide-transferase from Chlorobium chlorochromatii (strain CaD3).